We begin with the raw amino-acid sequence, 240 residues long: Adenylate dimethylallyltransferase (240 aa).

Belongs to the isopentenyl transferase family.

The enzyme catalyses dimethylallyl diphosphate + AMP = N(6)-(dimethylallyl)adenosine 5'-phosphate + diphosphate. Functionally, transfers dimethylallyl groups to AMP as part of the biosynthesis of cytokinin phytohormones. The polypeptide is Adenylate dimethylallyltransferase (ipt) (Agrobacterium vitis (Rhizobium vitis)).